The primary structure comprises 278 residues: D-arabinitol 2-dehydrogenase [ribulose-forming] (278 aa).

NADP(+) is bound by residues Leu28 and Asn49. Ser166 functions as the Proton donor in the catalytic mechanism. Residues Tyr181, Lys185, Ile214, and Thr216 each contribute to the NADP(+) site. Catalysis depends on Tyr181, which acts as the Proton acceptor. Residue Lys185 is the Lowers pKa of active site Tyr of the active site.

This sequence belongs to the short-chain dehydrogenases/reductases (SDR) family.

It catalyses the reaction D-arabinitol + NAD(+) = D-ribulose + NADH + H(+). It participates in carbohydrate metabolism; D-arabinitol metabolism. The sequence is that of D-arabinitol 2-dehydrogenase [ribulose-forming] (ARDH) from Scheffersomyces stipitis (strain ATCC 58785 / CBS 6054 / NBRC 10063 / NRRL Y-11545) (Yeast).